Here is a 383-residue protein sequence, read N- to C-terminus: Probable tRNA sulfurtransferase (383 aa).

Residues 58–158 (NEIIHILKMI…ENKSYVWFDK (101 aa)) enclose the THUMP domain. Residues 176 to 177 (LL), 201 to 202 (TF), Arg-259, Gly-281, and Gln-290 each bind ATP.

Belongs to the ThiI family.

Its subcellular location is the cytoplasm. It catalyses the reaction [ThiI sulfur-carrier protein]-S-sulfanyl-L-cysteine + a uridine in tRNA + 2 reduced [2Fe-2S]-[ferredoxin] + ATP + H(+) = [ThiI sulfur-carrier protein]-L-cysteine + a 4-thiouridine in tRNA + 2 oxidized [2Fe-2S]-[ferredoxin] + AMP + diphosphate. The catalysed reaction is [ThiS sulfur-carrier protein]-C-terminal Gly-Gly-AMP + S-sulfanyl-L-cysteinyl-[cysteine desulfurase] + AH2 = [ThiS sulfur-carrier protein]-C-terminal-Gly-aminoethanethioate + L-cysteinyl-[cysteine desulfurase] + A + AMP + 2 H(+). The protein operates within cofactor biosynthesis; thiamine diphosphate biosynthesis. Catalyzes the ATP-dependent transfer of a sulfur to tRNA to produce 4-thiouridine in position 8 of tRNAs, which functions as a near-UV photosensor. Also catalyzes the transfer of sulfur to the sulfur carrier protein ThiS, forming ThiS-thiocarboxylate. This is a step in the synthesis of thiazole, in the thiamine biosynthesis pathway. The sulfur is donated as persulfide by IscS. This chain is Probable tRNA sulfurtransferase, found in Malacoplasma penetrans (strain HF-2) (Mycoplasma penetrans).